The primary structure comprises 452 residues: Dimethyladenosine transferase 2, mitochondrial (452 aa).

S-adenosyl-L-methionine contacts are provided by I46, E99, and D125. A disordered region spans residues 408–452 (ANDEPNLEDGVTLPEEDDAEADEIIEEESPVPATTPVKRRRKASS). The span at 421–436 (PEEDDAEADEIIEEES) shows a compositional bias: acidic residues.

Belongs to the class I-like SAM-binding methyltransferase superfamily. rRNA adenine N(6)-methyltransferase family. KsgA subfamily.

It is found in the mitochondrion. Functionally, probable S-adenosyl-L-methionine-dependent methyltransferase which specifically dimethylates mitochondrial 12S rRNA at the conserved stem loop. Also required for basal transcription of mitochondrial DNA. Also regulates mitochondrial DNA copy number. Stimulates transcription independently of the methyltransferase activity. The polypeptide is Dimethyladenosine transferase 2, mitochondrial (mtTFB2) (Drosophila melanogaster (Fruit fly)).